A 118-amino-acid chain; its full sequence is UPF0102 protein Franean1_1156 (118 aa).

This sequence belongs to the UPF0102 family.

The polypeptide is UPF0102 protein Franean1_1156 (Parafrankia sp. (strain EAN1pec)).